A 960-amino-acid polypeptide reads, in one-letter code: Gamma-aminobutyric acid type B receptor subunit 1 (960 aa).

An N-terminal signal peptide occupies residues 1–19 (MLLLLLVPLFLRPLGAGGA). The Extracellular segment spans residues 20–590 (QTPNATSEGC…KTFRFLSQKL (571 aa)). Asn23 and Asn83 each carry an N-linked (GlcNAc...) asparagine glycan. 2 Sushi domains span residues 29-95 (CQII…PSRC) and 97-158 (RICS…HCQV). 3 cysteine pairs are disulfide-bonded: Cys99-Cys144, Cys130-Cys156, and Cys219-Cys245. Ser246, Ser269, His286, and Tyr366 together coordinate 4-aminobutanoate. An intrachain disulfide couples Cys375 to Cys409. N-linked (GlcNAc...) asparagine glycans are attached at residues Asn408 and Asn439. Glu465 lines the 4-aminobutanoate pocket. N-linked (GlcNAc...) asparagine glycans are attached at residues Asn481, Asn501, and Asn513. Residues 591-611 (FISVSVLSSLGIVLAVVCLSF) form a helical membrane-spanning segment. At 612 to 630 (NIYNSHVRYIQNSQPNLNN) the chain is on the cytoplasmic side. Residues 631-651 (LTAVGCSLALAAVFPLGLDGY) form a helical membrane-spanning segment. The Extracellular segment spans residues 652 to 666 (HIGRSQFPFVCQARL). A helical membrane pass occupies residues 667–687 (WLLGLGFSLGYGSMFTKIWWV). The Cytoplasmic segment spans residues 688-709 (HTVFTKKEEKKEWRKTLEPWKL). The helical transmembrane segment at 710-730 (YATVGLLVGMDVLTLAIWQIV) threads the bilayer. Topologically, residues 731–767 (DPLHRTIETFAKEEPKEDIDVSILPQLEHCSSKKMNT) are extracellular. A helical transmembrane segment spans residues 768-788 (WLGIFYGYKGLLLLLGIFLAY). The Cytoplasmic segment spans residues 789-803 (ETKSVSTEKINDHRA). The chain crosses the membrane as a helical span at residues 804–824 (VGMAIYNVAVLCLITAPVTMI). At 825–832 (LSSQQDAA) the chain is on the extracellular side. The chain crosses the membrane as a helical span at residues 833-853 (FAFASLAIVFSSYITLVVLFV). At 854 to 960 (PKMRRLITRG…DGSRVHLLYK (107 aa)) the chain is on the cytoplasmic side. Residues 866–879 (QSETQDTMKTGSST) are compositionally biased toward polar residues. 2 disordered regions span residues 866–891 (QSETQDTMKTGSSTNNNEEEKSRLLE) and 908–960 (VSEL…LLYK). Positions 870–924 (QDTMKTGSSTNNNEEEKSRLLEKENRELEKIIAEKEERVSELRHQLQSRQQLRSR) form a coiled coil. Thr872 is subject to Phosphothreonine. Residues 887–915 (SRLLEKENRELEKIIAEKEERVSELRHQL) are interaction with ATF4. Thr929 is modified (phosphothreonine).

Belongs to the G-protein coupled receptor 3 family. GABA-B receptor subfamily. As to quaternary structure, heterodimer of GABBR1 and GABBR2. Homodimers may form, but are inactive. Interacts (via C-terminus) with ATF4 (via leucine zipper domain). Interacts with JAKMIP1. As to expression, ubiquitously expressed in tissues including the forebrain, cerebellum, eye, atrium, ventricle, lung, stomach, small intestine, colon, liver, spleen, kidney, urinary bladder and skeletal muscle. Expressed at low levels in testis, and more highly in brain regions. Expression is high the brain regions including cerebral cortical layers, with higher expression in VIb than in the II-V layers, pyramidal CA1-CA3 cell layers and granular cell layers of the hippocampus, granular cell layers of the dentate gyrus, including the caudate, putamen, nucleus accumbens and olfactory tubercle, the granular layer cell layers of the medial habenula, in the cerebellum, predominantly in Purkinje cells, and in the granule cell layer. Also expressed in areas of the brain including the medial geniculate nucleus, substantia nigra, pars compacta, the ventral tegmental area, and in several thalamic, amygdaloid and hypothalamic nuclei, such as the arcuate nucleus of the hypothalamus and mammilary bodies of the hypothalamus. Expressed in the amacrine cell of the retina. In terms of tissue distribution, expressed in the brain, spinal cord, stomach, testis, adrenal gland, pituitary, spleen and prostate. Expressed in the brain, spinal cord, stomach, testis, kidney and liver. As to expression, ubiquitously expressed. In terms of tissue distribution, expressed in the forebrain, cerebellum, eye, kidney and urinary bladder. Ubiquitously expressed with high expression in the pyramidal CA1-CA3 cell layers of the hippocampus, the granule cell layers of the dentate gyrus and olfactory tubercle, the whole cortex, and Purkinje cells of the cerebellum. Moderate expression in the granule cell layer of the cerebellum.

Its subcellular location is the cell membrane. It localises to the postsynaptic cell membrane. The protein resides in the cell projection. It is found in the dendrite. The protein localises to the perikaryon. Component of a heterodimeric G-protein coupled receptor for GABA, formed by GABBR1 and GABBR2. Within the heterodimeric GABA receptor, only GABBR1 seems to bind agonists, while GABBR2 mediates coupling to G proteins. Ligand binding causes a conformation change that triggers signaling via guanine nucleotide-binding proteins (G proteins) and modulates the activity of down-stream effectors, such as adenylate cyclase. Signaling inhibits adenylate cyclase, stimulates phospholipase A2, activates potassium channels, inactivates voltage-dependent calcium-channels and modulates inositol phospholipid hydrolysis. Calcium is required for high affinity binding to GABA. Plays a critical role in the fine-tuning of inhibitory synaptic transmission. Pre-synaptic GABA receptor inhibits neurotransmitter release by down-regulating high-voltage activated calcium channels, whereas postsynaptic GABA receptor decreases neuronal excitability by activating a prominent inwardly rectifying potassium (Kir) conductance that underlies the late inhibitory postsynaptic potentials. Not only implicated in synaptic inhibition but also in hippocampal long-term potentiation, slow wave sleep, muscle relaxation and antinociception. The protein is Gamma-aminobutyric acid type B receptor subunit 1 (Gabbr1) of Rattus norvegicus (Rat).